Reading from the N-terminus, the 511-residue chain is GMP synthase [glutamine-hydrolyzing] (511 aa).

The Glutamine amidotransferase type-1 domain maps to 6–196 (LVLVLDFGSQ…VFDVCGCTGD (191 aa)). Catalysis depends on Cys83, which acts as the Nucleophile. Active-site residues include His170 and Glu172. The GMPS ATP-PPase domain maps to 197–386 (WSIENFIDME…LGVPDRIVWR (190 aa)). 224–230 (SGGVDSS) is a binding site for ATP.

In terms of assembly, homodimer.

It carries out the reaction XMP + L-glutamine + ATP + H2O = GMP + L-glutamate + AMP + diphosphate + 2 H(+). The protein operates within purine metabolism; GMP biosynthesis; GMP from XMP (L-Gln route): step 1/1. Functionally, catalyzes the synthesis of GMP from XMP. This chain is GMP synthase [glutamine-hydrolyzing], found in Oceanobacillus iheyensis (strain DSM 14371 / CIP 107618 / JCM 11309 / KCTC 3954 / HTE831).